Reading from the N-terminus, the 353-residue chain is Photosystem II protein D1 (353 aa).

Thr2 carries the N-acetylthreonine modification. Phosphothreonine is present on Thr2. Transmembrane regions (helical) follow at residues 29–46 (YIGWFGVLMIPTLLTATS), 118–133 (HFLLGVACYMGREWEL), and 142–156 (WIAVAYSAPVAAATA). Residue His118 participates in chlorophyll a binding. Tyr126 is a binding site for pheophytin a. Residues Asp170 and Glu189 each coordinate [CaMn4O5] cluster. A helical transmembrane segment spans residues 197 to 218 (FHMLGVAGVFGGSLFSAMHGSL). His198 provides a ligand contact to chlorophyll a. A quinone contacts are provided by residues His215 and 264-265 (SF). His215 contributes to the Fe cation binding site. His272 is a Fe cation binding site. A helical transmembrane segment spans residues 274–288 (FLTAWPVVGIWFTAL). [CaMn4O5] cluster contacts are provided by His332, Glu333, Asp342, and Ala344. The propeptide occupies 345–353 (VVEAPSTNG).

Belongs to the reaction center PufL/M/PsbA/D family. In terms of assembly, PSII is composed of 1 copy each of membrane proteins PsbA, PsbB, PsbC, PsbD, PsbE, PsbF, PsbH, PsbI, PsbJ, PsbK, PsbL, PsbM, PsbT, PsbX, PsbY, PsbZ, Psb30/Ycf12, at least 3 peripheral proteins of the oxygen-evolving complex and a large number of cofactors. It forms dimeric complexes. The D1/D2 heterodimer binds P680, chlorophylls that are the primary electron donor of PSII, and subsequent electron acceptors. It shares a non-heme iron and each subunit binds pheophytin, quinone, additional chlorophylls, carotenoids and lipids. D1 provides most of the ligands for the Mn4-Ca-O5 cluster of the oxygen-evolving complex (OEC). There is also a Cl(-1) ion associated with D1 and D2, which is required for oxygen evolution. The PSII complex binds additional chlorophylls, carotenoids and specific lipids. serves as cofactor. In terms of processing, tyr-161 forms a radical intermediate that is referred to as redox-active TyrZ, YZ or Y-Z. C-terminally processed by CTPA; processing is essential to allow assembly of the oxygen-evolving complex and thus photosynthetic growth.

The protein localises to the plastid. It is found in the chloroplast thylakoid membrane. The enzyme catalyses 2 a plastoquinone + 4 hnu + 2 H2O = 2 a plastoquinol + O2. Photosystem II (PSII) is a light-driven water:plastoquinone oxidoreductase that uses light energy to abstract electrons from H(2)O, generating O(2) and a proton gradient subsequently used for ATP formation. It consists of a core antenna complex that captures photons, and an electron transfer chain that converts photonic excitation into a charge separation. The D1/D2 (PsbA/PsbD) reaction center heterodimer binds P680, the primary electron donor of PSII as well as several subsequent electron acceptors. The protein is Photosystem II protein D1 of Aethionema cordifolium (Lebanon stonecress).